The following is a 190-amino-acid chain: Elongation factor P (190 aa).

The protein belongs to the elongation factor P family.

It localises to the cytoplasm. It functions in the pathway protein biosynthesis; polypeptide chain elongation. Functionally, involved in peptide bond synthesis. Stimulates efficient translation and peptide-bond synthesis on native or reconstituted 70S ribosomes in vitro. Probably functions indirectly by altering the affinity of the ribosome for aminoacyl-tRNA, thus increasing their reactivity as acceptors for peptidyl transferase. The protein is Elongation factor P of Sulfurihydrogenibium sp. (strain YO3AOP1).